Here is a 186-residue protein sequence, read N- to C-terminus: uncharacterized protein (186 aa).

The Macro domain occupies 1 to 181 (MVSFSYKGNL…TFVSLASDFL (181 aa)).

This sequence belongs to the MacroD-type family.

This is an uncharacterized protein from Thermoplasma volcanium (strain ATCC 51530 / DSM 4299 / JCM 9571 / NBRC 15438 / GSS1).